Reading from the N-terminus, the 191-residue chain is Glutathione S-transferase Y-2 (191 aa).

Positions 2-80 constitute a GST N-terminal domain; it reads TFATVYIKPH…YIVAKGSKPE (79 aa). Positions 85–191 constitute a GST C-terminal domain; it reads TTEERATNTR…VSQHPIIKNM (107 aa).

Belongs to the GST superfamily.

It catalyses the reaction RX + glutathione = an S-substituted glutathione + a halide anion + H(+). Its function is as follows. Conjugation of reduced glutathione to a wide number of exogenous and endogenous hydrophobic electrophiles. This Pichia kudriavzevii (Yeast) protein is Glutathione S-transferase Y-2 (GSTY2).